The sequence spans 1129 residues: Serine/threonine-protein kinase 11-interacting protein (1129 aa).

LRR repeat units follow at residues serine 107–tyrosine 128, glutamine 130–cysteine 150, valine 162–leucine 183, serine 185–leucine 206, glutamate 208–asparagine 229, lysine 232–proline 253, asparagine 254–alanine 275, and asparagine 279–threonine 300. 4 disordered regions span residues arginine 335–glutamine 392, aspartate 428–proline 475, glycine 654–glycine 678, and asparagine 696–alanine 724. Residues glutamine 337–tyrosine 355 are compositionally biased toward polar residues. Positions leucine 365–valine 374 are enriched in basic residues. Basic and acidic residues predominate over residues glutamate 381–glycine 391. Residues histidine 436 to threonine 447 show a composition bias toward pro residues. Residues alanine 448 to proline 458 show a composition bias toward low complexity.

Belongs to the STK11IP family.

The protein localises to the cytoplasm. This Xenopus tropicalis (Western clawed frog) protein is Serine/threonine-protein kinase 11-interacting protein (stk11ip).